A 280-amino-acid polypeptide reads, in one-letter code: Shikimate dehydrogenase (NADP(+)) (280 aa).

Shikimate is bound by residues 23–25 (SLS) and T70. K74 serves as the catalytic Proton acceptor. Residues N95 and D111 each coordinate shikimate. NADP(+) contacts are provided by residues 135-139 (GSGGA), 158-163 (NRTISK), and I221. Y223 is a shikimate binding site. G247 provides a ligand contact to NADP(+).

Belongs to the shikimate dehydrogenase family. Homodimer.

It carries out the reaction shikimate + NADP(+) = 3-dehydroshikimate + NADPH + H(+). The protein operates within metabolic intermediate biosynthesis; chorismate biosynthesis; chorismate from D-erythrose 4-phosphate and phosphoenolpyruvate: step 4/7. Its function is as follows. Involved in the biosynthesis of the chorismate, which leads to the biosynthesis of aromatic amino acids. Catalyzes the reversible NADPH linked reduction of 3-dehydroshikimate (DHSA) to yield shikimate (SA). The chain is Shikimate dehydrogenase (NADP(+)) from Buchnera aphidicola subsp. Cinara cedri (strain Cc).